We begin with the raw amino-acid sequence, 427 residues long: Gamma-glutamyl phosphate reductase (427 aa).

This sequence belongs to the gamma-glutamyl phosphate reductase family.

It localises to the cytoplasm. It carries out the reaction L-glutamate 5-semialdehyde + phosphate + NADP(+) = L-glutamyl 5-phosphate + NADPH + H(+). The protein operates within amino-acid biosynthesis; L-proline biosynthesis; L-glutamate 5-semialdehyde from L-glutamate: step 2/2. In terms of biological role, catalyzes the NADPH-dependent reduction of L-glutamate 5-phosphate into L-glutamate 5-semialdehyde and phosphate. The product spontaneously undergoes cyclization to form 1-pyrroline-5-carboxylate. This is Gamma-glutamyl phosphate reductase from Rhizobium etli (strain ATCC 51251 / DSM 11541 / JCM 21823 / NBRC 15573 / CFN 42).